The following is a 203-amino-acid chain: Membrane-spanning 4-domains subfamily A member 13 (203 aa).

4 helical membrane passes run 15 to 35, 56 to 76, 84 to 104, and 141 to 161; these read VLGV…YFLL, MGTS…VKAA, ILCT…AASL, and FAIA…SSIV.

The protein belongs to the MS4A family.

The protein resides in the membrane. In terms of biological role, may be involved in signal transduction as a component of a multimeric receptor complex. The chain is Membrane-spanning 4-domains subfamily A member 13 (Ms4a13) from Mus musculus (Mouse).